The following is a 119-amino-acid chain: MRLGAGFRKPVPTLLLEHRSRKSGKNFVAPLLYITDRNNVIVVASALGQAENPQWYRNLPPNPDTHIQIGSDRRPVRAVVASSDERARLWPRPVDAYADFDSCQSWTERGIPVIILRPR.

Coenzyme F420-(gamma-Glu)n contacts are provided by residues 21-23 (RKS), 27-32 (FVAPLL), 43-46 (VASA), and 54-58 (QWYRN).

The protein belongs to the F420H(2)-dependent quinone reductase family.

It is found in the cell membrane. The enzyme catalyses oxidized coenzyme F420-(gamma-L-Glu)(n) + a quinol + H(+) = reduced coenzyme F420-(gamma-L-Glu)(n) + a quinone. In terms of biological role, involved in a F420-dependent anti-oxidant mechanism that protects M.tuberculosis against oxidative stress and bactericidal agents. Catalyzes the F420H(2)-dependent two-electron reduction of quinones to dihydroquinones, thereby preventing the formation of cytotoxic semiquinones obtained by the one-electron reduction pathway. Since menaquinone is the sole quinone electron carrier in the respiratory chain in M.tuberculosis, the physiological electron acceptor for Fqr-mediated F420H(2) oxidation is therefore likely to be the endogenous menaquinone found in the membrane fraction of M.tuberculosis. The chain is Putative F420H(2)-dependent quinone reductase Rv3178 from Mycobacterium tuberculosis (strain ATCC 25618 / H37Rv).